Consider the following 89-residue polypeptide: Small ribosomal subunit protein uS15 (89 aa).

Over residues 1–10 (MSITAEKKQE) the composition is skewed to basic and acidic residues. Residues 1–24 (MSITAEKKQEVIQSNARAEGDTGS) are disordered.

The protein belongs to the universal ribosomal protein uS15 family. In terms of assembly, part of the 30S ribosomal subunit. Forms a bridge to the 50S subunit in the 70S ribosome, contacting the 23S rRNA.

Its function is as follows. One of the primary rRNA binding proteins, it binds directly to 16S rRNA where it helps nucleate assembly of the platform of the 30S subunit by binding and bridging several RNA helices of the 16S rRNA. Forms an intersubunit bridge (bridge B4) with the 23S rRNA of the 50S subunit in the ribosome. This Novosphingobium aromaticivorans (strain ATCC 700278 / DSM 12444 / CCUG 56034 / CIP 105152 / NBRC 16084 / F199) protein is Small ribosomal subunit protein uS15.